The following is a 101-amino-acid chain: DNA-binding protein Fis (101 aa).

Residues 77–96 constitute a DNA-binding region (H-T-H motif); the sequence is QTRAANMLGINRGTLRKKLK.

Belongs to the transcriptional regulatory Fis family. In terms of assembly, homodimer.

Functionally, activates ribosomal RNA transcription. Plays a direct role in upstream activation of rRNA promoters. The polypeptide is DNA-binding protein Fis (Shewanella frigidimarina (strain NCIMB 400)).